A 187-amino-acid chain; its full sequence is UPF0200 protein MA_4660 (187 aa).

ATP is bound at residue G9 to S16.

Belongs to the UPF0200 family.

This Methanosarcina acetivorans (strain ATCC 35395 / DSM 2834 / JCM 12185 / C2A) protein is UPF0200 protein MA_4660.